We begin with the raw amino-acid sequence, 913 residues long: Eukaryotic translation initiation factor 3 subunit C (913 aa).

The interval 1-22 is disordered; sequence MSRFFANGSDSESESSEEEVQA. Residues 11-20 are compositionally biased toward acidic residues; sequence SESESSEEEV. Ser-34, Ser-165, Ser-177, and Ser-186 each carry phosphoserine. Positions 157-285 are disordered; it reads FREAPDQESD…KRAEDDEDGE (129 aa). The segment covering 162 to 171 has biased composition (acidic residues); that stretch reads DQESDVEEGE. Basic and acidic residues predominate over residues 172–184; it reads GEPHDSDGDRAGA. The segment covering 214-239 has biased composition (acidic residues); it reads DEDDSDDSIDWDSDTESETESSEDEN. The segment covering 244–263 has biased composition (basic and acidic residues); that stretch reads MRERFLKRTTEKEDKDDDKR. The segment covering 264–276 has biased composition (basic residues); the sequence is KDKRKEQKHKVRK. Residues 645 to 821 form the PCI domain; sequence FHMHINLELL…ETVVMHRSEP (177 aa). The segment at 856-913 is disordered; the sequence is RGNMGNRDRGYNRNQNNQGGNWGGQRRDNRNQRNRNQRGHHKQQQQQQQQQVQTIEEE. Over residues 887 to 898 the composition is skewed to basic residues; the sequence is QRNRNQRGHHKQ.

It belongs to the eIF-3 subunit C family. In terms of assembly, component of the eukaryotic translation initiation factor 3 (eIF-3) complex. The eIF-3 complex interacts with pix.

The protein resides in the cytoplasm. Functionally, component of the eukaryotic translation initiation factor 3 (eIF-3) complex, which is involved in protein synthesis of a specialized repertoire of mRNAs and, together with other initiation factors, stimulates binding of mRNA and methionyl-tRNAi to the 40S ribosome. The eIF-3 complex specifically targets and initiates translation of a subset of mRNAs involved in cell proliferation. This Drosophila mojavensis (Fruit fly) protein is Eukaryotic translation initiation factor 3 subunit C.